The primary structure comprises 288 residues: Bifunctional protein FolD 2 (288 aa).

Residues 166–168 (GRS) and S191 contribute to the NADP(+) site.

This sequence belongs to the tetrahydrofolate dehydrogenase/cyclohydrolase family. Homodimer.

The catalysed reaction is (6R)-5,10-methylene-5,6,7,8-tetrahydrofolate + NADP(+) = (6R)-5,10-methenyltetrahydrofolate + NADPH. The enzyme catalyses (6R)-5,10-methenyltetrahydrofolate + H2O = (6R)-10-formyltetrahydrofolate + H(+). It functions in the pathway one-carbon metabolism; tetrahydrofolate interconversion. Functionally, catalyzes the oxidation of 5,10-methylenetetrahydrofolate to 5,10-methenyltetrahydrofolate and then the hydrolysis of 5,10-methenyltetrahydrofolate to 10-formyltetrahydrofolate. This Frankia casuarinae (strain DSM 45818 / CECT 9043 / HFP020203 / CcI3) protein is Bifunctional protein FolD 2.